A 130-amino-acid chain; its full sequence is Phosphoribosyl-AMP cyclohydrolase (130 aa).

D78 provides a ligand contact to Mg(2+). A Zn(2+)-binding site is contributed by C79. Positions 80 and 82 each coordinate Mg(2+). 2 residues coordinate Zn(2+): C96 and C103.

It belongs to the PRA-CH family. As to quaternary structure, homodimer. Mg(2+) serves as cofactor. Zn(2+) is required as a cofactor.

It is found in the cytoplasm. It carries out the reaction 1-(5-phospho-beta-D-ribosyl)-5'-AMP + H2O = 1-(5-phospho-beta-D-ribosyl)-5-[(5-phospho-beta-D-ribosylamino)methylideneamino]imidazole-4-carboxamide. It participates in amino-acid biosynthesis; L-histidine biosynthesis; L-histidine from 5-phospho-alpha-D-ribose 1-diphosphate: step 3/9. In terms of biological role, catalyzes the hydrolysis of the adenine ring of phosphoribosyl-AMP. This chain is Phosphoribosyl-AMP cyclohydrolase, found in Nitrosospira multiformis (strain ATCC 25196 / NCIMB 11849 / C 71).